Consider the following 27-residue polypeptide: MDLIFPLVGSLLLVICVMVGVAFLTLL.

The helical transmembrane segment at 3-23 threads the bilayer; that stretch reads LIFPLVGSLLLVICVMVGVAF.

Belongs to the complex I subunit 1 family.

Its subcellular location is the mitochondrion inner membrane. It catalyses the reaction a ubiquinone + NADH + 5 H(+)(in) = a ubiquinol + NAD(+) + 4 H(+)(out). Its function is as follows. Core subunit of the mitochondrial membrane respiratory chain NADH dehydrogenase (Complex I) that is believed to belong to the minimal assembly required for catalysis. Complex I functions in the transfer of electrons from NADH to the respiratory chain. The immediate electron acceptor for the enzyme is believed to be ubiquinone. This Simulium vittatum (Striped black fly) protein is NADH-ubiquinone oxidoreductase chain 1 (ND1).